The chain runs to 351 residues: Renin receptor (351 aa).

Residues 1–17 (MAVLVVFLSFLVADVFG) form the signal peptide. Topologically, residues 18–303 (NEFSILRSPG…YNLAYKYNFE (286 aa)) are extracellular. A helical transmembrane segment spans residues 304 to 324 (YPVVFNLVLWIMIGLALTLIV). Residues 325-351 (TCYNIWNMDPGYDSIIYRMTNQKIRMD) lie on the Cytoplasmic side of the membrane. The Mediates retrograde transport to the ER signature appears at 347 to 351 (KIRMD).

In terms of assembly, interacts with renin. Accessory component of the multisubunit proton-transporting vacuolar (V)-ATPase protein pump. Interacts (via N-terminus) with ATP6AP1 (via N-terminus). Interacts with ATP6V0D1; ATP6V0D1 is a V-ATPase complex subunit and the interaction promotes V-ATPase complex assembly. Interacts with TMEM9; TMEM9 is a V-ATPase assembly regulator and the interaction induces the interaction with ATP6V0D1. Interacts with VMA21 (via N-terminus); VMA21 is a V-ATPase accessory component. In terms of processing, phosphorylated. Proteolytically cleaved by a furin-like convertase in the trans-Golgi network to generate N- and C-terminal fragments. Expressed in the brain.

The protein resides in the endoplasmic reticulum membrane. The protein localises to the lysosome membrane. It localises to the cytoplasmic vesicle. It is found in the autophagosome membrane. Its subcellular location is the cell projection. The protein resides in the dendritic spine membrane. The protein localises to the axon. It localises to the endosome membrane. It is found in the clathrin-coated vesicle membrane. Its subcellular location is the secretory vesicle. The protein resides in the synaptic vesicle membrane. Its function is as follows. Multifunctional protein which functions as a renin, prorenin cellular receptor and is involved in the assembly of the lysosomal proton-transporting V-type ATPase (V-ATPase) and the acidification of the endo-lysosomal system. May mediate renin-dependent cellular responses by activating ERK1 and ERK2. By increasing the catalytic efficiency of renin in AGT/angiotensinogen conversion to angiotensin I, may also play a role in the renin-angiotensin system (RAS). Through its function in V-type ATPase (v-ATPase) assembly and acidification of the lysosome it regulates protein degradation and may control different signaling pathways important for proper brain development, synapse morphology and synaptic transmission. This is Renin receptor (ATP6AP2) from Bos taurus (Bovine).